Reading from the N-terminus, the 72-residue chain is Inner membrane protein YmgF (72 aa).

The Cytoplasmic segment spans residues 1 to 9 (MNNSNNLDY). Residues 10–30 (FTLYIIFSIAFMLITLLVILI) traverse the membrane as a helical segment. The Periplasmic segment spans residues 31-34 (AKPS). A helical transmembrane segment spans residues 35–55 (TGLGEVLVTINLLNALVWLAI). Residues 56 to 72 (NLVNRLRERLVNHRDQQ) are Cytoplasmic-facing.

Interacts with FtsL, FtsQ, FtsI, FtsN, and probably many other cell division proteins.

It is found in the cell inner membrane. Functionally, could be involved in cell division. May participate in the stabilization of the cell divisome under specific conditions. The polypeptide is Inner membrane protein YmgF (ymgF) (Escherichia coli (strain K12)).